Reading from the N-terminus, the 332-residue chain is UPF0194 membrane protein YbhG (332 aa).

The first 16 residues, 1–16 (MMKKPVVIGLAVVVLA), serve as a signal peptide directing secretion. The stretch at 108–209 (EEIAQAAAAV…LNLQDSTLIA (102 aa)) forms a coiled coil.

It belongs to the UPF0194 family.

Its subcellular location is the periplasm. This chain is UPF0194 membrane protein YbhG, found in Escherichia coli O127:H6 (strain E2348/69 / EPEC).